Reading from the N-terminus, the 93-residue chain is Integration host factor subunit beta (93 aa).

Belongs to the bacterial histone-like protein family. As to quaternary structure, heterodimer of an alpha and a beta chain.

Functionally, this protein is one of the two subunits of integration host factor, a specific DNA-binding protein that functions in genetic recombination as well as in transcriptional and translational control. The sequence is that of Integration host factor subunit beta from Tolumonas auensis (strain DSM 9187 / NBRC 110442 / TA 4).